Here is a 429-residue protein sequence, read N- to C-terminus: Phosphomethylpyrimidine synthase (429 aa).

Residues Asn66, Met94, Tyr123, His162, 184–186 (SRG), 225–228 (DALR), and Glu264 contribute to the substrate site. Position 268 (His268) interacts with Zn(2+). Tyr291 serves as a coordination point for substrate. Residue His332 participates in Zn(2+) binding. [4Fe-4S] cluster contacts are provided by Cys408, Cys411, and Cys415.

This sequence belongs to the ThiC family. The cofactor is [4Fe-4S] cluster.

It carries out the reaction 5-amino-1-(5-phospho-beta-D-ribosyl)imidazole + S-adenosyl-L-methionine = 4-amino-2-methyl-5-(phosphooxymethyl)pyrimidine + CO + 5'-deoxyadenosine + formate + L-methionine + 3 H(+). It functions in the pathway cofactor biosynthesis; thiamine diphosphate biosynthesis. In terms of biological role, catalyzes the synthesis of the hydroxymethylpyrimidine phosphate (HMP-P) moiety of thiamine from aminoimidazole ribotide (AIR) in a radical S-adenosyl-L-methionine (SAM)-dependent reaction. This chain is Phosphomethylpyrimidine synthase, found in Sulfurisphaera tokodaii (strain DSM 16993 / JCM 10545 / NBRC 100140 / 7) (Sulfolobus tokodaii).